A 554-amino-acid polypeptide reads, in one-letter code: MNSNAYLEAQRWLSHPRVKPNLKEVITAMSAEEIEHFFSLKKPSFGTAGVRGKMAPGYHGMNVFSYAYLTQGYVNYIQSLNPTKKPLRFLVARDTRKHGALFNGIVCDVITSMGHVVYMFDNNEPTPTPLVSYVIKKYHFDGGVNVTASHNPKTDNGFKIYDGHGAQLLDFQTDQLIAMLPPVVTMLDFEPRGNNELLHFLDNEVVYKNYFDDLKESLVVDNDSFKNLPVVFTGLHGTSVKLLPRFLTYLGYSNIISVQPQNVFDANFANADHLNPESKDTWELARQYASNTKAKLMMAIDPDADRFAIAEWNPQTQDWHYFSGNESGVMVAYYKLKHKQFKRQPYIVTTVVSTDLVDKIAKKYGAFVKRTNVGFKFIGQAVNHFSKDNELVVAFEEAIGMMASDGLNREKDSFQAAAIMLEIARYCHNKGISLLEFYRGEIFGEFGDYYNWTVPHTIHGVNWKEKMEQVLHQLTTATIKEVVGHKITKIKNYVDINLVEYVLENGNWIKFRISGTEPKLKLYFNLSNGYLAALKHEAKKMHEFLVRLLNLDKA.

The Phosphoserine intermediate role is filled by Ser-149. The Mg(2+) site is built by Ser-149, Asp-301, Asp-303, and Asp-305.

Belongs to the phosphohexose mutase family. Mg(2+) is required as a cofactor.

The catalysed reaction is alpha-D-mannose 1-phosphate = D-mannose 6-phosphate. The sequence is that of Phosphomannomutase (manB) from Mycoplasma pneumoniae (strain ATCC 29342 / M129 / Subtype 1) (Mycoplasmoides pneumoniae).